A 521-amino-acid polypeptide reads, in one-letter code: Probable rhamnogalacturonase B (521 aa).

Residues 1-21 form the signal peptide; the sequence is MRLHAFTLLSLLGLVPSFAAA. Cys42 and Cys68 are joined by a disulfide. Residue Asn145 is glycosylated (N-linked (GlcNAc...) asparagine). Asp219 (proton donor) is an active-site residue. Cys221 and Cys238 are oxidised to a cystine. Asn239 is a glycosylation site (N-linked (GlcNAc...) asparagine). His294 is an active-site residue. N-linked (GlcNAc...) asparagine glycosylation is present at Asn321. 2 disulfides stabilise this stretch: Cys344-Cys350 and Cys372-Cys381. Positions 462 to 521 are disordered; sequence ETPAAASRSEQVVQGAPQETGQSAPESAGPVPSGNPGPVPTGGSRPSRHRHGHHHFGSAI. Residues 469–486 are compositionally biased toward polar residues; that stretch reads RSEQVVQGAPQETGQSAP. The span at 507-521 shows a compositional bias: basic residues; sequence PSRHRHGHHHFGSAI.

The protein belongs to the glycosyl hydrolase 28 family.

The protein localises to the secreted. The catalysed reaction is Endohydrolysis of alpha-D-GalA-(1-&gt;2)-alpha-L-Rha glycosidic bond in the rhamnogalacturonan I backbone with initial inversion of anomeric configuration releasing oligosaccharides with beta-D-GalA at the reducing end.. Functionally, pectinolytic enzymes consist of four classes of enzymes: pectine lyase, polygalacturonase, pectin methylesterase and rhamnogalacturonase. Hydrolyzes alpha-D-galacturonopyranosyl-(1,2)-alpha-L-rhamnopyranosyl linkages in the backbone of the hairy regions of pectins. The protein is Probable rhamnogalacturonase B (rhgB) of Aspergillus fumigatus (strain CBS 144.89 / FGSC A1163 / CEA10) (Neosartorya fumigata).